A 1198-amino-acid polypeptide reads, in one-letter code: MAEHPPLLDTSSIISSEIPLLTSPIVSGDGAQQVILVQVNPGEAFTIRREDGQFQCITGPAQVPMMSPNGSVPTIYVPPGYAPQVIEDNGVRRVVVVPQAPEFHPGGHAVIHRPPHPPLPGFLPLPAMIPPPPRHIYSPVTGAGDMATQYIPQYHTSQMYGDLDTLPAHGRANFRDERSSKTYERLQKKLKDRHGTQKDKLNSPPSSPQKCPSPTSEPNGLTKGQDTAGISTGSTKSKSVGKGKSNSQTDVEIEEKDEETKALEALLSNIAKPVVSDVQARTALLMWSPPSIDVGEDTDKTNIPGVYTYEVMISNTGKDGKYKTVYIGEENKVTVNDLRPATDYHAKVQVECNCVKGSPSEVESFTTMSCEPDAPNLPRITNRTKNSLTLQWKASCDNGSKIHSYLLEWDEGKGNGEFCQCYYGQQKQYRITKLSPAMGYTFRLAAKNDMGMSGFSEEVLYHTSGTAATTPASPLLINAGVTWLSLQWTKPSGTPSDEGISYILEMEDENSGYGFKPKYDGDDLTYTVKNLRRSTKYKFRVIAYNSEGKSSPSETVDYTTCPDKPGAPSKPSVKGKIHAQSFKIIWDPPKDNGGAAINTYVVEISEGSNGNKWDTIYSGAAREHLCDRLNPGCSYRLRVYCIGEGGQSMASDSLLVQTPAVVPGPCQPPRLQGRPRAREIQLRWGPPQVDGGSPITCYGLEMFQTETDEHREVYQGSDVECTVGSLLPGRMYNFRLRAANKAGFGPYSEKCEITTAPGPPDQCKPPQVTCRSAACAQVSWEVPVSNGADVTEYRLEWGGMEGCMQISYCGPGLNCEMKGLLPATIYYCRVQAVNVAGAGPFSEVVACMTPASVPAVVTCLRGLSEDEVESPHYYPSTCLALSWEKPCDHGSEITGYSIDFGDKQPITVGKVLSYFIDGLQPDTTYRIRIQALNSLGAGPFSHTIKLKTKPLPPDPPRLECVAYSSQTLKLKWGEGTAKALTDSIQYHLQMEDKNGRFVSLYRGPCHTYKVQRLSESTSYKFCIQACNEAGEGPLSQEYVFTTPKSVPAALKAPRIERINDHTCEITWEVLQPMKGDPVIYCLQVMVGKDSEFKQIYKGPDWSFRYTGLQLNCEYRFRACAIRQCQETSGHQDLIGPYSSPVLFISQRTEPPTSTNKDTVQTTRTQWSQSDQVCAAVILALFAIFSILIAVIIQYFVIK.

Residues 189–201 are compositionally biased toward basic and acidic residues; it reads KLKDRHGTQKDKL. Residues 189–256 are disordered; it reads KLKDRHGTQK…SQTDVEIEEK (68 aa). Positions 229-247 are enriched in low complexity; it reads GISTGSTKSKSVGKGKSNS. Fibronectin type-III domains follow at residues 269-370, 374-466, 470-563, 567-661, 665-758, 762-852, 864-951, 952-1045, and 1046-1151; these read NIAK…TMSC, APNL…TSGT, TPAS…TCPD, APSK…TPAV, PCQP…TAPG, QCKP…TPAS, SEDE…TKPL, PPDP…TPKS, and VPAA…TEPP. The interval 553–574 is disordered; sequence SETVDYTTCPDKPGAPSKPSVK. A helical membrane pass occupies residues 1172–1192; sequence VCAAVILALFAIFSILIAVII.

Belongs to the FNDC3 family.

The protein localises to the golgi apparatus membrane. The sequence is that of Fibronectin type-III domain-containing protein 3a (FNDC3A) from Gallus gallus (Chicken).